The sequence spans 456 residues: Methylenetetrahydrofolate--tRNA-(uracil-5-)-methyltransferase TrmFO (456 aa).

9–14 (GGGMAG) contacts FAD.

This sequence belongs to the MnmG family. TrmFO subfamily. It depends on FAD as a cofactor.

The protein resides in the cytoplasm. The catalysed reaction is uridine(54) in tRNA + (6R)-5,10-methylene-5,6,7,8-tetrahydrofolate + NADH + H(+) = 5-methyluridine(54) in tRNA + (6S)-5,6,7,8-tetrahydrofolate + NAD(+). The enzyme catalyses uridine(54) in tRNA + (6R)-5,10-methylene-5,6,7,8-tetrahydrofolate + NADPH + H(+) = 5-methyluridine(54) in tRNA + (6S)-5,6,7,8-tetrahydrofolate + NADP(+). In terms of biological role, catalyzes the folate-dependent formation of 5-methyl-uridine at position 54 (M-5-U54) in all tRNAs. This Novosphingobium aromaticivorans (strain ATCC 700278 / DSM 12444 / CCUG 56034 / CIP 105152 / NBRC 16084 / F199) protein is Methylenetetrahydrofolate--tRNA-(uracil-5-)-methyltransferase TrmFO.